A 396-amino-acid chain; its full sequence is Phosphoglycerate kinase (396 aa).

Substrate contacts are provided by residues Asp-21–Asn-23, Arg-36, His-59–Arg-62, Arg-118, and Arg-151. Residues Lys-201, Gly-292, Glu-323, and Gly-349–Ser-352 each bind ATP.

Belongs to the phosphoglycerate kinase family. In terms of assembly, monomer.

The protein resides in the cytoplasm. The enzyme catalyses (2R)-3-phosphoglycerate + ATP = (2R)-3-phospho-glyceroyl phosphate + ADP. Its pathway is carbohydrate degradation; glycolysis; pyruvate from D-glyceraldehyde 3-phosphate: step 2/5. The protein is Phosphoglycerate kinase of Leptospira interrogans serogroup Icterohaemorrhagiae serovar Lai (strain 56601).